A 246-amino-acid chain; its full sequence is MRSGVIAQKLGMTRVYNDAGEHVPVTVLRLENCQVIAQRTIEKNGYTAVQLGVGFAKVKNTSRALRGHFAKVSVEPKAKIAEFRVSPDNLLDIGTEITAQHFVPGQRVDVTGTSIGKGFAGVMKRHNFGGHRASHGNSITHRAHGSTGQCQDPGKVFKGKKMAGHMGQVRVTTQNIEVVSTDVERGLILVRGAVSGSKGAWILVRDAVKRPLPDNVPRPAGIRQLAKEKTEMVTPVTETSEAEGAE.

Q151 carries the post-translational modification N5-methylglutamine.

Belongs to the universal ribosomal protein uL3 family. Part of the 50S ribosomal subunit. Forms a cluster with proteins L14 and L19. Post-translationally, methylated by PrmB.

One of the primary rRNA binding proteins, it binds directly near the 3'-end of the 23S rRNA, where it nucleates assembly of the 50S subunit. The sequence is that of Large ribosomal subunit protein uL3 from Bartonella quintana (strain Toulouse) (Rochalimaea quintana).